We begin with the raw amino-acid sequence, 426 residues long: Tachykinins (426 aa).

The propeptide occupies 1–116; that stretch reads MQCDFRVHQD…IEDNLSHEFE (116 aa). An Arginine amide modification is found at Arg127. Positions 131–145 are excised as a propeptide; sequence GYLTPDFEDSYFRDE. At Arg156 the chain carries Arginine amide. A propeptide spanning residues 160–167 is cleaved from the precursor; sequence VVSDDDYY. Residue Arg178 is modified to Arginine amide. The propeptide occupies 182 to 235; that stretch reads SLEEVLGEIEKKAAMDYYDTRDKKTYVFEYPEDYEKRLLASIRGKLKEFPMEWE. Arg246 is modified (arginine amide). A propeptide spanning residues 250–259 is cleaved from the precursor; the sequence is SLLDEIEELE. Arg270 carries the arginine amide modification. Residues 274–291 constitute a propeptide that is removed on maturation; sequence NALENYIDYYLDPDMDFD. The interval 299-329 is disordered; sequence QGMRGKKDSDKRAPMGFQGMRGKRNTGQRFD. An Arginine amide modification is found at Arg302. The propeptide occupies 306–308; it reads DSD. Arg319 is subject to Arginine amide. Positions 323–358 are excised as a propeptide; it reads NTGQRFDTGINFNIRSSNEYQGTNNRRNALASCQLE. 2 positions are modified to arginine amide: Arg369 and Arg386. Residues 390–426 constitute a propeptide that is removed on maturation; the sequence is WATAPYEDDSPFISVFDNTERIGVDGDSPAILGNSIS.

This sequence belongs to the tachykinin family. Tachykinins (TK) are expressed throughout the nervous system. APMGFQGMR-amide is also expressed in the retrocerebral complex (at protein level).

Its subcellular location is the secreted. Tachykinins are active peptides which excite neurons, evoke behavioral responses, are potent vasodilators and secretagogues, and contract (directly or indirectly) many smooth muscles. The sequence is that of Tachykinins from Camponotus floridanus (Florida carpenter ant).